Consider the following 419-residue polypeptide: Argininosuccinate synthase (419 aa).

9–17 lines the ATP pocket; the sequence is AYSGGLDTS. Y87 serves as a coordination point for L-citrulline. Position 117 (G117) interacts with ATP. T119, N123, and D124 together coordinate L-aspartate. N123 contributes to the L-citrulline binding site. Residues R127, S175, S184, E260, and Y272 each contribute to the L-citrulline site.

Belongs to the argininosuccinate synthase family. Type 1 subfamily. In terms of assembly, homotetramer.

It is found in the cytoplasm. It catalyses the reaction L-citrulline + L-aspartate + ATP = 2-(N(omega)-L-arginino)succinate + AMP + diphosphate + H(+). Its pathway is amino-acid biosynthesis; L-arginine biosynthesis; L-arginine from L-ornithine and carbamoyl phosphate: step 2/3. The protein is Argininosuccinate synthase of Brevibacillus brevis (strain 47 / JCM 6285 / NBRC 100599).